A 99-amino-acid polypeptide reads, in one-letter code: MDLAFELRKAMETGKVVLGSNETIRLAKTGGAKLIIVAKNAPKEIKDDIYYYAKLSDIPVYEFEGTSVELGTLLGKPFVVASLAIVDPGESKILAIAKR.

This sequence belongs to the eukaryotic ribosomal protein eL30 family. Part of the 50S ribosomal subunit.

This Pyrococcus furiosus (strain ATCC 43587 / DSM 3638 / JCM 8422 / Vc1) protein is Large ribosomal subunit protein eL30.